A 257-amino-acid polypeptide reads, in one-letter code: Ribosomal RNA small subunit methyltransferase J (257 aa).

Residues 107 to 108 (RD), 123 to 124 (ER), and Asp177 each bind S-adenosyl-L-methionine.

The protein belongs to the methyltransferase superfamily. RsmJ family.

It localises to the cytoplasm. It carries out the reaction guanosine(1516) in 16S rRNA + S-adenosyl-L-methionine = N(2)-methylguanosine(1516) in 16S rRNA + S-adenosyl-L-homocysteine + H(+). Functionally, specifically methylates the guanosine in position 1516 of 16S rRNA. The polypeptide is Ribosomal RNA small subunit methyltransferase J (Haemophilus influenzae (strain 86-028NP)).